Reading from the N-terminus, the 462-residue chain is Cysteine--tRNA ligase (462 aa).

C28 provides a ligand contact to Zn(2+). The 'HIGH' region signature appears at 30–40 (MTVYDYCHIGH). Residues C209, H234, and E238 each contribute to the Zn(2+) site. A 'KMSKS' region motif is present at residues 266–270 (KMSKS). K269 serves as a coordination point for ATP.

It belongs to the class-I aminoacyl-tRNA synthetase family. Monomer. The cofactor is Zn(2+).

It is found in the cytoplasm. It catalyses the reaction tRNA(Cys) + L-cysteine + ATP = L-cysteinyl-tRNA(Cys) + AMP + diphosphate. The sequence is that of Cysteine--tRNA ligase from Pseudomonas fluorescens (strain SBW25).